Reading from the N-terminus, the 192-residue chain is UPF0312 protein YPK_1931 (192 aa).

The signal sequence occupies residues 1–23 (MINKTLLGLSLGALMFTAGSAVA).

It belongs to the UPF0312 family. Type 1 subfamily.

The protein resides in the periplasm. This is UPF0312 protein YPK_1931 from Yersinia pseudotuberculosis serotype O:3 (strain YPIII).